We begin with the raw amino-acid sequence, 56 residues long: Large ribosomal subunit protein bL33 (56 aa).

This sequence belongs to the bacterial ribosomal protein bL33 family.

This Halorhodospira halophila (strain DSM 244 / SL1) (Ectothiorhodospira halophila (strain DSM 244 / SL1)) protein is Large ribosomal subunit protein bL33.